Reading from the N-terminus, the 34-residue chain is GILLDKLKNFAKTAGKGVLQSLLNTASCKLSGQC.

Cys28 and Cys34 are disulfide-bonded.

The protein belongs to the frog skin active peptide (FSAP) family. Brevinin subfamily. As to expression, expressed by the skin glands.

It localises to the secreted. In terms of biological role, shows antibacterial activity against representative Gram-negative and Gram-positive bacterial species, and hemolytic activity. In Pelophylax lessonae (Pool frog), this protein is Brevinin-2Ec.